The following is a 487-amino-acid chain: Protein nucleotidyltransferase YdiU (487 aa).

Residues Gly90, Gly92, Arg93, Lys113, Asp125, Gly126, Arg176, and Arg183 each coordinate ATP. Asp252 (proton acceptor) is an active-site residue. Positions 253 and 262 each coordinate Mg(2+). Asp262 serves as a coordination point for ATP.

It belongs to the SELO family. Mg(2+) is required as a cofactor. The cofactor is Mn(2+).

The enzyme catalyses L-seryl-[protein] + ATP = 3-O-(5'-adenylyl)-L-seryl-[protein] + diphosphate. It catalyses the reaction L-threonyl-[protein] + ATP = 3-O-(5'-adenylyl)-L-threonyl-[protein] + diphosphate. It carries out the reaction L-tyrosyl-[protein] + ATP = O-(5'-adenylyl)-L-tyrosyl-[protein] + diphosphate. The catalysed reaction is L-histidyl-[protein] + UTP = N(tele)-(5'-uridylyl)-L-histidyl-[protein] + diphosphate. The enzyme catalyses L-seryl-[protein] + UTP = O-(5'-uridylyl)-L-seryl-[protein] + diphosphate. It catalyses the reaction L-tyrosyl-[protein] + UTP = O-(5'-uridylyl)-L-tyrosyl-[protein] + diphosphate. Functionally, nucleotidyltransferase involved in the post-translational modification of proteins. It can catalyze the addition of adenosine monophosphate (AMP) or uridine monophosphate (UMP) to a protein, resulting in modifications known as AMPylation and UMPylation. The protein is Protein nucleotidyltransferase YdiU of Azotobacter vinelandii (strain DJ / ATCC BAA-1303).